Consider the following 144-residue polypeptide: Cytochrome c-type biogenesis protein CcmE (144 aa).

The Cytoplasmic segment spans residues M1–R7. A helical; Signal-anchor for type II membrane protein transmembrane segment spans residues A8–A28. The Periplasmic segment spans residues L29–K144. Residues H121 and Y125 each contribute to the heme site.

Belongs to the CcmE/CycJ family.

It localises to the cell inner membrane. Functionally, heme chaperone required for the biogenesis of c-type cytochromes. Transiently binds heme delivered by CcmC and transfers the heme to apo-cytochromes in a process facilitated by CcmF and CcmH. In Polynucleobacter necessarius subsp. necessarius (strain STIR1), this protein is Cytochrome c-type biogenesis protein CcmE.